Consider the following 537-residue polypeptide: Cytochrome P450 monooxygenase yanC (537 aa).

A signal peptide spans 1–21 (MALVHLTALAACGLLLVILRA). A heme-binding site is contributed by Cys449.

The protein belongs to the cytochrome P450 family. It depends on heme as a cofactor.

Its pathway is secondary metabolite biosynthesis; terpenoid biosynthesis. In terms of biological role, cytochrome P450 monooxygenase; part of the gene cluster that mediates the biosynthesis of yanuthone D, a fungal isoprenoid epoxycyclohexenone that acts as an antibiotic against fungi and bacteria. The first step of the pathway is the synthesis of 6-methylsalicylic acid (6-MSA) by the polyketide synthase yanA. 6-MSA is then converted to m-cresol by the decarboxylase yanB. The cytochrome P450 monooxygenase yanC then catalyzes the oxidation of m-cresol to toluquinol. Epoxidation of toluquinol is then performed by the short chain dehydrogenase yanD, with the help of yanE, and a further prenylation by yanG leads to 7-deacetoxyyanuthone A. The next step is the hydroxylation of C-22 of 7-deacetoxyyanuthone A by the cytochrome P450 monooxygenase yanH to yield 22-deacetylyanuthone A. O-Mevalon transferase yanI then attaches mevalon to the hydroxyl group of 22-deacetylyanuthone A to produce yanuthone E. Finally, the FAD-dependent monooxygenase yanF oxidizes the hydroxyl group at C15 of yanuthone E to form yanuthone D. Furthermore, several branching points in the pathway lead to the production of yanuthones F and G from 7-deacetoxyyanuthone A; yanuthones H and I from 22-deacetylyanuthone A; and yanuthone J from yanuthone E. YanC is also involved in the synthesis of yanuthone X1 which does not have 6-methylsalicylic acid (6-MSA) as precursor. This chain is Cytochrome P450 monooxygenase yanC, found in Aspergillus niger (strain ATCC 1015 / CBS 113.46 / FGSC A1144 / LSHB Ac4 / NCTC 3858a / NRRL 328 / USDA 3528.7).